Reading from the N-terminus, the 68-residue chain is Protein transport protein Sec61 gamma-1 subunit (68 aa).

The Cytoplasmic portion of the chain corresponds to 1 to 32 (MDKVVKFAEPGRAFAKDSIRLVKRCTKPDRKE). A helical membrane pass occupies residues 33–61 (FQKIAIATAVGFAIMGFIGFFVKLIHIPI). Topologically, residues 62 to 68 (NNIIVGS) are extracellular.

This sequence belongs to the SecE/SEC61-gamma family. Heterotrimeric complex composed of SEC61-alpha, SEC61-beta and SEC61-gamma.

It localises to the endoplasmic reticulum membrane. Functionally, necessary for protein translocation in the endoplasmic reticulum. The protein is Protein transport protein Sec61 gamma-1 subunit (SEC61G1) of Drosophila melanogaster (Fruit fly).